Reading from the N-terminus, the 459-residue chain is MRPPSPPHVRWLCVLAGALACALRPAGSQAASPQHECEYLQLIEIQRQQCLEEAQLENETTGCSKMWDNLTCWPTTPRGQAVVLDCPLIFQLFAPIHGYNISRSCTEEGWSQLEPGPYHIACGLNDRASSLDEQQQTKFYNTVKTGYTIGYSLSLASLLVAMAILSLFRKLHCTRNYIHMHLFMSFILRATAVFIKDMALFNSGEIDHCSEASVGCKAAVVFFQYCVMANFFWLLVEGLYLYTLLAVSFFSERKYFWGYILIGWGVPSVFITIWTVVRIYFEDFGCWDTIINSSLWWIIKAPILLSILVNFVLFICIIRILVQKLRPPDIGKNDSSPYSRLAKSTLLLIPLFGIHYVMFAFFPDNFKAQVKMVFELVVGSFQGFVVAILYCFLNGEVQAELRRKWRRWHLQGVLGWSSKSQHPWGGSNGATCSTQVSMLTRVSPSARRSSSFQAEVSLV.

A signal peptide spans 1–30; it reads MRPPSPPHVRWLCVLAGALACALRPAGSQA. The Extracellular portion of the chain corresponds to 31–142; it reads ASPQHECEYL…EQQQTKFYNT (112 aa). 5 disulfide bridges follow: cysteine 37-cysteine 209, cysteine 50-cysteine 72, cysteine 63-cysteine 105, cysteine 86-cysteine 122, and cysteine 216-cysteine 286. Asparagine 58, asparagine 69, and asparagine 100 each carry an N-linked (GlcNAc...) asparagine glycan. The chain crosses the membrane as a helical span at residues 143-167; it reads VKTGYTIGYSLSLASLLVAMAILSL. The Cytoplasmic portion of the chain corresponds to 168–175; sequence FRKLHCTR. Residues 176–197 form a helical membrane-spanning segment; the sequence is NYIHMHLFMSFILRATAVFIKD. At 198-217 the chain is on the extracellular side; the sequence is MALFNSGEIDHCSEASVGCK. A helical transmembrane segment spans residues 218-242; that stretch reads AAVVFFQYCVMANFFWLLVEGLYLY. Topologically, residues 243-255 are cytoplasmic; it reads TLLAVSFFSERKY. The chain crosses the membrane as a helical span at residues 256-277; that stretch reads FWGYILIGWGVPSVFITIWTVV. Residues 278 to 293 lie on the Extracellular side of the membrane; the sequence is RIYFEDFGCWDTIINS. An N-linked (GlcNAc...) asparagine glycan is attached at asparagine 292. The helical transmembrane segment at 294–318 threads the bilayer; it reads SLWWIIKAPILLSILVNFVLFICII. Topologically, residues 319-340 are cytoplasmic; that stretch reads RILVQKLRPPDIGKNDSSPYSR. A helical transmembrane segment spans residues 341-361; sequence LAKSTLLLIPLFGIHYVMFAF. Topologically, residues 362–369 are extracellular; sequence FPDNFKAQ. A helical transmembrane segment spans residues 370 to 393; sequence VKMVFELVVGSFQGFVVAILYCFL. At 394 to 459 the chain is on the cytoplasmic side; it reads NGEVQAELRR…SSFQAEVSLV (66 aa).

Belongs to the G-protein coupled receptor 2 family. As to quaternary structure, interacts with ADCYAP1/PACAP; activated by both PACAP27 and PACAP38 neuropeptides. Interacts with VIP; the interaction results in VIPR1 activation. In liver, lung, intestines, thymus and brain (mostly in the cerebral cortex and hippocampus).

Its subcellular location is the cell membrane. G protein-coupled receptor activated by the neuropeptides vasoactive intestinal peptide (VIP) and pituitary adenylate cyclase-activating polypeptide (ADCYAP1/PACAP). Binds VIP and both PACAP27 and PACAP38 bioactive peptides with the following order of ligand affinity VIP = PACAP27 &gt; PACAP38. Ligand binding causes a conformation change that triggers signaling via guanine nucleotide-binding proteins (G proteins) and modulates the activity of downstream effectors. Activates cAMP-dependent pathway. The chain is Vasoactive intestinal polypeptide receptor 1 from Rattus norvegicus (Rat).